The sequence spans 147 residues: Transcriptional regulator MraZ (147 aa).

SpoVT-AbrB domains are found at residues 5-50 (AIAL…PLSA) and 79-122 (AQEE…SDAG).

Belongs to the MraZ family. In terms of assembly, forms oligomers.

The protein resides in the cytoplasm. Its subcellular location is the nucleoid. This is Transcriptional regulator MraZ from Aromatoleum aromaticum (strain DSM 19018 / LMG 30748 / EbN1) (Azoarcus sp. (strain EbN1)).